A 295-amino-acid polypeptide reads, in one-letter code: MTIKAPALNLPGLGADPLTQRIKEKEKKWKYKVAVLSGKGGVGKSTVAVNLTAALAKMGYFVGILDADIHGPNVAKMLGVEKEEIYAEKFDDGHFEMIPPMADFMGQVTPIKVMSMGMMVPEDQPIIWRGALVTKAIKQLLGDVKWGSLDFMIIDFPPGTGDEILTVVQSIQLDAAIIVTTPQEVALLDTGKAVNMMKKMEVPYIAVVENMSYLICPHCGNKIDIFGEGGGEKLAEKEGVDFLGKIPIDLKAREASDLGIPIVLYGDTPAAKAFMEIAEKLVNKLKEMKGDEKKE.

38-45 (GKGGVGKS) lines the ATP pocket.

The protein belongs to the Mrp/NBP35 ATP-binding proteins family. In terms of assembly, homodimer.

Binds and transfers iron-sulfur (Fe-S) clusters to target apoproteins. Can hydrolyze ATP. In Pyrococcus abyssi (strain GE5 / Orsay), this protein is Iron-sulfur cluster carrier protein.